A 304-amino-acid polypeptide reads, in one-letter code: Calcium release-activated calcium channel protein 1 (304 aa).

The span at 1-11 (MHPEPAPPPSH) shows a compositional bias: pro residues. Residues 1–50 (MHPEPAPPPSHSNPELPVSGGSSTSGSRRSRRRSGDGEPSGAPPLPPPPP) are disordered. Topologically, residues 1–89 (MHPEPAPPPS…KLYLSRAKLK (89 aa)) are cytoplasmic. The interval 3-49 (PEPAPPPSHSNPELPVSGGSSTSGSRRSRRRSGDGEPSGAPPLPPPP) is required for generation of inwardly rectifying CRAC currents. The span at 12–27 (SNPELPVSGGSSTSGS) shows a compositional bias: low complexity. Residues 39 to 61 (PSGAPPLPPPPPAVSYPDWIGQS) form an AKAP5 association region region. Over residues 41–50 (GAPPLPPPPP) the composition is skewed to pro residues. Residues 72 to 92 (SMQALSWRKLYLSRAKLKASS) form an interaction with STIM1 region. Residues 90-107 (ASSRTSALLSGFAMVAMV) form a helical membrane-spanning segment. The Extracellular segment spans residues 108 to 121 (EVQLDTDHDYPPGL). Residues 122–142 (LIVFSACTTVLVAVHLFALMI) form a helical membrane-spanning segment. Residues 143–175 (STCILPNIEAVSNVHNLNSVKESPHERMHRHIE) lie on the Cytoplasmic side of the membrane. Residues 176-196 (LAWAFSTVIGTLLFLAEVVLL) form a helical membrane-spanning segment. Residues 197 to 237 (CWVKFLPLKRQAGQPSPTKPPAESVIVANHSDSSGITPGEA) lie on the Extracellular side of the membrane. Asn-225 is a glycosylation site (N-linked (GlcNAc...) asparagine). The helical transmembrane segment at 238–258 (AAIASTAIMVPCGLVFIVFAV) threads the bilayer. Over 259-304 (HFYRSLVSHKTDRQFQELNELAEFARLQDQLDHRGDHSLTPGTHYA) the chain is Cytoplasmic. The interval 275 to 295 (ELNELAEFARLQDQLDHRGDH) is interaction with STIM1. Thr-298 bears the Phosphothreonine mark.

The protein belongs to the Orai family. In terms of assembly, oligomerizes in homomeric and heteromeric ORAI complexes. Native CRAC channels most likely consist of hexameric ORAI heteromers, implying that diverse ORAI1, ORAI2 and ORAI3 subunit combinations with distinct biophysical properties can operate in a cell-type specific way. ARC channels are heteropentamers consisting of three ORAI1 and two ORAI3 subunits. Interacts with STIM1 and STIM2; this regulates channel activity. Interacts with CALM; this may displace STIM1 and STIM2 and might thereby modulate channel activity. Interacts (via N-terminus) with AKAP5 upon store depletion. Interacts with CRACR2A/EFCAB4B; the interaction is direct and takes place in absence of Ca(2+). Forms a complex with CRACR2A/EFCAB4B and STIM1 at low concentration of Ca(2+), the complex dissociates at elevated Ca(2+) concentrations. Interacts with ASPH (isoform 8). Interacts with SLC35G1. Interacts with UBQLN1. Interacts with ADCY8; interaction is calcium store depletion independent; interaction occurs in membrane raft; interaction increases markedly after store depletion; positively regulates SOCE-induced adenylate cyclase activity; contributes to the targeting of ADCY8 to discrete regions of the plasma membrane that are shielded from other calcium events. Interacts with EFHB; the interaction takes place upon Ca(2+)-store depletion. Interacts (via N- and C-termini) with ATP2C2 (via N-terminus); this interaction regulates Ca(2+) influx at the plasma membrane. Interacts with TSPAN18; this interaction regulates ORAI1 exit from the endoplasmic (ER), and/or Golgi, and trafficking to the cell surface. N-glycosylated. N-glycosylation inhibits channel activity in T cells. Post-translationally, ubiquitinated. In terms of processing, cys-195 is oxidated, leading to inactivation of channel activity. Expressed in lactating mammary epithelium (at protein level).

It localises to the cell membrane. Its subcellular location is the basolateral cell membrane. The catalysed reaction is Ca(2+)(in) = Ca(2+)(out). With respect to regulation, oxidation at Cys-197 leads to inactivation of channel activity. In terms of biological role, pore-forming subunit of two major inward rectifying Ca(2+) channels at the plasma membrane: Ca(2+) release-activated Ca(2+) (CRAC) channels and arachidonate-regulated Ca(2+)-selective (ARC) channels. Assembles with ORAI2 and ORAI3 to form hexameric CRAC channels that mediate Ca(2+) influx upon depletion of endoplasmic reticulum Ca(2+) store and channel activation by Ca(2+) sensor STIM1, a process known as store-operated Ca(2+) entry (SOCE). Various pore subunit combinations may account for distinct CRAC channel spatiotemporal and cell-type specific dynamics. ORAI1 mainly contributes to the generation of Ca(2+) plateaus involved in sustained Ca(2+) entry and is dispensable for cytosolic Ca(2+) oscillations, whereas ORAI2 and ORAI3 generate oscillatory patterns. CRAC channels assemble in Ca(2+) signaling microdomains where Ca(2+) influx is coupled to calmodulin and calcineurin signaling and activation of NFAT transcription factors recruited to ORAI1 via AKAP5. Activates NFATC2/NFAT1 and NFATC3/NFAT4-mediated transcriptional responses. CRAC channels are the main pathway for Ca(2+) influx in T cells and promote the immune response to pathogens by activating NFAT-dependent cytokine and chemokine transcription. Assembles with ORAI3 to form channels that mediate store-independent Ca(2+) influx in response to inflammatory metabolites arachidonate or its derivative leukotriene C4, termed ARC and LRC channels respectively. Plays a prominent role in Ca(2+) influx at the basolateral membrane of mammary epithelial cells independently of the Ca(2+) content of endoplasmic reticulum or Golgi stores. May mediate transepithelial transport of large quantities of Ca(2+) for milk secretion. In Mus musculus (Mouse), this protein is Calcium release-activated calcium channel protein 1 (Orai1).